We begin with the raw amino-acid sequence, 1342 residues long: DNA-directed RNA polymerase subunit beta (1342 aa).

It belongs to the RNA polymerase beta chain family. In terms of assembly, the RNAP catalytic core consists of 2 alpha, 1 beta, 1 beta' and 1 omega subunit. When a sigma factor is associated with the core the holoenzyme is formed, which can initiate transcription.

It carries out the reaction RNA(n) + a ribonucleoside 5'-triphosphate = RNA(n+1) + diphosphate. Functionally, DNA-dependent RNA polymerase catalyzes the transcription of DNA into RNA using the four ribonucleoside triphosphates as substrates. The chain is DNA-directed RNA polymerase subunit beta from Salmonella choleraesuis (strain SC-B67).